The primary structure comprises 405 residues: CRS2-associated factor 1, mitochondrial (405 aa).

Residues 1–20 constitute a mitochondrion transit peptide; that stretch reads MFLIRLSRHNPSSFTLLTRR. The interval 32 to 75 is disordered; sequence RDLYNFQSPPPLSSSASENPDFNQKNNNKKKPKPQYRPPSSLEG. CRM domains are found at residues 157–255 and 277–373; these read ASLT…KRPK and DGLS…KEDD. The disordered stretch occupies residues 384-405; it reads SIDSDVDLSCSRGAQDSPDETT.

As to quaternary structure, part of large ribonucleo-protein complexes that include group IIB introns.

The protein resides in the mitochondrion. Its function is as follows. May be involved in the splicing of group IIB introns in mitochondria. This Arabidopsis thaliana (Mouse-ear cress) protein is CRS2-associated factor 1, mitochondrial.